Reading from the N-terminus, the 343-residue chain is Flavonoid 3'-O-methyltransferase FOMT (343 aa).

G184, D207, D227, M228, M240, and K241 together coordinate S-adenosyl-L-homocysteine. The active-site Proton acceptor is the H245. Active-site residues include E273 and E305.

It belongs to the class I-like SAM-binding methyltransferase superfamily. Cation-independent O-methyltransferase family. In terms of assembly, homodimer.

It catalyses the reaction 3',5-dihydroxy-3,4',7-trimethoxyflavone + S-adenosyl-L-methionine = 5-hydroxy-3,7,3',4'-tetramethoxyflavone + S-adenosyl-L-homocysteine + H(+). It participates in flavonoid metabolism. Its activity is regulated as follows. Inhibited by nickel (NiCl(2) and NiSO(4)) and para-chloromercuribenzoate. Functionally, catalyzes the 3'- or 5'-O-methylation of partially methylated flavonols, but does not accept quercetin or caffeate as substrates for methylation. This is Flavonoid 3'-O-methyltransferase FOMT from Chrysosplenium americanum (American golden saxifrage).